We begin with the raw amino-acid sequence, 387 residues long: MSDINEKLPELLQDAVLKASVPIPDDFVKVQGIDYSKPEATNMRATDLIEAMKTMGFQASSVGTACEIIDSMRSWRGKHIDELDDHEKKGCFDEEGYQKTTIFMGYTSNLISSGVRETLRYLVQHKMVDAVVTSAGGVEEDLIKCLAPTYLGEFALKGKSLRDQGMNRIGNLLVPNDNYCKFEEWIVPILDKMLEEQDEYVKKHGADCLEANQDVDSPIWTPSKMIDRFGKEINDESSVLYWAHKNKIPIFCPSLTDGSIGDMLFFHTFKASPKQLRVDIVGDIRKINSMSMAAYRAGMIILGGGLIKHHIANACLMRNGADYAVYINTGQEYDGSDAGARPDEAVSWGKIKAEAKSVKLFADVTTVLPLIVAATFASGKPIKKVKN.

Residues 108–112 (SNLIS), 134–136 (SAG), Glu140, and Asp257 each bind NAD(+). 139-140 (EE) serves as a coordination point for spermidine. Asp262 serves as a coordination point for spermidine. Gly304 serves as a coordination point for NAD(+). His309 contributes to the spermidine binding site. Residue 329–330 (TG) coordinates NAD(+). Spermidine-binding positions include 335–337 (GSD) and 344–350 (EAVSWGK). The active-site Nucleophile is the Lys350. 363–364 (DV) serves as a coordination point for NAD(+).

Belongs to the deoxyhypusine synthase family. As to quaternary structure, homotetramer. Requires NAD(+) as cofactor.

It carries out the reaction [eIF5A protein]-L-lysine + spermidine = [eIF5A protein]-deoxyhypusine + propane-1,3-diamine. The protein operates within protein modification; eIF5A hypusination. Functionally, catalyzes the NAD-dependent oxidative cleavage of spermidine and the subsequent transfer of the butylamine moiety of spermidine to the epsilon-amino group of a specific lysine residue of the eIF-5A precursor protein to form the intermediate deoxyhypusine residue. The chain is Deoxyhypusine synthase from Saccharomyces cerevisiae (strain ATCC 204508 / S288c) (Baker's yeast).